Reading from the N-terminus, the 30-residue chain is Ribosome-inactivating protein momorcochin-S (30 aa).

This sequence belongs to the ribosome-inactivating protein family. Type 1 RIP subfamily. Glycosylated.

The enzyme catalyses Endohydrolysis of the N-glycosidic bond at one specific adenosine on the 28S rRNA.. Its function is as follows. Inactivates eukaryotic 60S ribosomal subunits. The protein is Ribosome-inactivating protein momorcochin-S of Momordica cochinchinensis (Spiny bitter cucumber).